A 431-amino-acid chain; its full sequence is MESTPPYHRSNTKSASRLQDSSNPPNLSLDLVLSSPNTPNPSSPVPLRDILLLPPSPLRKSRTRLSDRLEMTSEDAMAVVRKRGKGKGGQKSLLASPRNPRRSRRRSEAVEEKEANLVIEEIVKLPPRKRKTNGRPKKDKQSSAPPLCSSSDLPNTCQSDLNLIGEIISDLVMWRDVAKSTLWFGFGCLSFLSSCFAKGVNFSVFSAVSNLGLVLLCGSFLSNTLCQRKNEDTKRAFHVSEDDVLRSARRVLPATNFFISKTSELFSGEPSMTLKVTPFLLLGAEYGHLITLWRLSAFGFFLSFTIPKLYSCYTHQISQKVERVKTRIGEAWGVCSHKKILAGSAVTAFWNLTSIRTRIFAVFIILVIFRYRRQNLQLTPEEVEPVENEQEEETLPQEEETVPQEEETVPQEEEQTQPSEERALVVVVAET.

2 disordered regions span residues 1-110 and 126-152; these read MEST…SEAV and PPRKRKTNGRPKKDKQSSAPPLCSSSD. Residues 12-26 are compositionally biased toward polar residues; that stretch reads TKSASRLQDSSNPPN. A compositionally biased stretch (basic residues) spans 126–138; the sequence is PPRKRKTNGRPKK. Over residues 142–152 the composition is skewed to polar residues; sequence SSAPPLCSSSD. Residues 168–355 form the Reticulon domain; that stretch reads ISDLVMWRDV…VTAFWNLTSI (188 aa). 4 helical membrane-spanning segments follow: residues 177–197, 202–222, 286–306, and 349–369; these read VAKSTLWFGFGCLSFLSSCFA, FSVFSAVSNLGLVLLCGSFLS, YGHLITLWRLSAFGFFLSFTI, and FWNLTSIRTRIFAVFIILVIF. The span at 382 to 415 shows a compositional bias: acidic residues; that stretch reads EVEPVENEQEEETLPQEEETVPQEEETVPQEEEQ. Positions 382–422 are disordered; that stretch reads EVEPVENEQEEETLPQEEETVPQEEETVPQEEEQTQPSEER.

It localises to the endoplasmic reticulum membrane. The protein is Reticulon-like protein B17 (RTNLB17) of Arabidopsis thaliana (Mouse-ear cress).